The chain runs to 286 residues: Putative inorganic pyrophosphatase C3A12.02 (286 aa).

Arg85 provides a ligand contact to diphosphate. Mg(2+) is bound by residues Asp122, Asp127, and Asp159.

It belongs to the PPase family. Mg(2+) serves as cofactor.

It is found in the cytoplasm. The catalysed reaction is diphosphate + H2O = 2 phosphate + H(+). The sequence is that of Putative inorganic pyrophosphatase C3A12.02 from Schizosaccharomyces pombe (strain 972 / ATCC 24843) (Fission yeast).